The primary structure comprises 182 residues: NAD(P)H-quinone oxidoreductase subunit I, chloroplastic (182 aa).

4Fe-4S ferredoxin-type domains follow at residues 52–81 (GRIHFEFDKCIACEVCVRVCPINLPVVDWE) and 92–121 (KSYSIDFGVCIFCGNCVEYCPTNCLSMTEE). [4Fe-4S] cluster-binding residues include cysteine 61, cysteine 64, cysteine 67, cysteine 71, cysteine 101, cysteine 104, cysteine 107, and cysteine 111.

It belongs to the complex I 23 kDa subunit family. NDH is composed of at least 16 different subunits, 5 of which are encoded in the nucleus. [4Fe-4S] cluster is required as a cofactor.

It is found in the plastid. Its subcellular location is the chloroplast thylakoid membrane. It catalyses the reaction a plastoquinone + NADH + (n+1) H(+)(in) = a plastoquinol + NAD(+) + n H(+)(out). It carries out the reaction a plastoquinone + NADPH + (n+1) H(+)(in) = a plastoquinol + NADP(+) + n H(+)(out). NDH shuttles electrons from NAD(P)H:plastoquinone, via FMN and iron-sulfur (Fe-S) centers, to quinones in the photosynthetic chain and possibly in a chloroplast respiratory chain. The immediate electron acceptor for the enzyme in this species is believed to be plastoquinone. Couples the redox reaction to proton translocation, and thus conserves the redox energy in a proton gradient. This Chaetosphaeridium globosum (Charophycean green alga) protein is NAD(P)H-quinone oxidoreductase subunit I, chloroplastic.